Here is a 282-residue protein sequence, read N- to C-terminus: Phosphatidylserine decarboxylase proenzyme (282 aa).

Catalysis depends on charge relay system; for autoendoproteolytic cleavage activity residues D89, H145, and S249. S249 (schiff-base intermediate with substrate; via pyruvic acid; for decarboxylase activity) is an active-site residue. S249 carries the post-translational modification Pyruvic acid (Ser); by autocatalysis.

The protein belongs to the phosphatidylserine decarboxylase family. PSD-B subfamily. Prokaryotic type I sub-subfamily. Heterodimer of a large membrane-associated beta subunit and a small pyruvoyl-containing alpha subunit. Pyruvate is required as a cofactor. In terms of processing, is synthesized initially as an inactive proenzyme. Formation of the active enzyme involves a self-maturation process in which the active site pyruvoyl group is generated from an internal serine residue via an autocatalytic post-translational modification. Two non-identical subunits are generated from the proenzyme in this reaction, and the pyruvate is formed at the N-terminus of the alpha chain, which is derived from the carboxyl end of the proenzyme. The autoendoproteolytic cleavage occurs by a canonical serine protease mechanism, in which the side chain hydroxyl group of the serine supplies its oxygen atom to form the C-terminus of the beta chain, while the remainder of the serine residue undergoes an oxidative deamination to produce ammonia and the pyruvoyl prosthetic group on the alpha chain. During this reaction, the Ser that is part of the protease active site of the proenzyme becomes the pyruvoyl prosthetic group, which constitutes an essential element of the active site of the mature decarboxylase.

Its subcellular location is the cell membrane. The catalysed reaction is a 1,2-diacyl-sn-glycero-3-phospho-L-serine + H(+) = a 1,2-diacyl-sn-glycero-3-phosphoethanolamine + CO2. It participates in phospholipid metabolism; phosphatidylethanolamine biosynthesis; phosphatidylethanolamine from CDP-diacylglycerol: step 2/2. Its function is as follows. Catalyzes the formation of phosphatidylethanolamine (PtdEtn) from phosphatidylserine (PtdSer). This Anaeromyxobacter sp. (strain K) protein is Phosphatidylserine decarboxylase proenzyme.